The chain runs to 163 residues: MKLNTLFNLNGAKKCSKRIGRGIGSGKGKTCGRGAKGQKSRAKVARGFEGGQTPLIKRLPKRGFKSMNKRNYNIINIITILRLVKANKIEYGAVIDKLLLLKLKMLKKSINKIKLLWANPSSLVLSSEDISLLTKLDLQFNLDEYSISARKNIIKLGMKVINN.

It belongs to the universal ribosomal protein uL15 family. Part of the 50S ribosomal subunit.

Binds to the 23S rRNA. The sequence is that of Large ribosomal subunit protein uL15 from Orientia tsutsugamushi (strain Boryong) (Rickettsia tsutsugamushi).